We begin with the raw amino-acid sequence, 877 residues long: Alanine--tRNA ligase (877 aa).

Zn(2+) is bound by residues H563, H567, C665, and H669.

It belongs to the class-II aminoacyl-tRNA synthetase family. Zn(2+) serves as cofactor.

It localises to the cytoplasm. It carries out the reaction tRNA(Ala) + L-alanine + ATP = L-alanyl-tRNA(Ala) + AMP + diphosphate. Functionally, catalyzes the attachment of alanine to tRNA(Ala) in a two-step reaction: alanine is first activated by ATP to form Ala-AMP and then transferred to the acceptor end of tRNA(Ala). Also edits incorrectly charged Ser-tRNA(Ala) and Gly-tRNA(Ala) via its editing domain. This Thermoanaerobacter pseudethanolicus (strain ATCC 33223 / 39E) (Clostridium thermohydrosulfuricum) protein is Alanine--tRNA ligase.